The sequence spans 187 residues: dITP/XTP pyrophosphatase (187 aa).

Residue Thr7–Lys12 coordinates substrate. The Mg(2+) site is built by Glu36 and Asp64. Asp64 functions as the Proton acceptor in the catalytic mechanism. Substrate contacts are provided by residues Ala65, Phe140–Asp143, Lys163, and His168–Arg169.

This sequence belongs to the HAM1 NTPase family. As to quaternary structure, homodimer. Mg(2+) serves as cofactor.

It catalyses the reaction XTP + H2O = XMP + diphosphate + H(+). It carries out the reaction dITP + H2O = dIMP + diphosphate + H(+). The catalysed reaction is ITP + H2O = IMP + diphosphate + H(+). Functionally, pyrophosphatase that catalyzes the hydrolysis of nucleoside triphosphates to their monophosphate derivatives, with a high preference for the non-canonical purine nucleotides XTP (xanthosine triphosphate), dITP (deoxyinosine triphosphate) and ITP. Seems to function as a house-cleaning enzyme that removes non-canonical purine nucleotides from the nucleotide pool, thus preventing their incorporation into DNA/RNA and avoiding chromosomal lesions. This Methanothermobacter marburgensis (strain ATCC BAA-927 / DSM 2133 / JCM 14651 / NBRC 100331 / OCM 82 / Marburg) (Methanobacterium thermoautotrophicum) protein is dITP/XTP pyrophosphatase.